The sequence spans 375 residues: MQKLQIFVYIYLFMLLVAGPVDLNENSEQKENVEKKGLCNACLWRQSNKSSRLEAIKIQILSKLRLETAPNISKDAIRQLLPKAPPLRELIDQYDVQRDDSSDGSLEDDDYHVTTETVITMPTESDLLAEVQEKPKCCFFKFSSKIQHNKVVKAQLWIYLRPVKTPTTVFVQILRLIKPMKDGTRYTGIRSLKLDMNPGTGIWQSIDVKTVLQNWLKQPESNLGIEIKALDENGHDLAVTFPEPGEEGLNPFLEVKVTDTPKRSRRDFGLDCDEHSTESRCCRYPLTVDFEAFGWDWIIAPKRYKANYCSGECEFLFLQKYPHTHLVHQANPKGSAGPCCTPTKMSPINMLYFNGKEQIIYGKIPGMVVDRCGCS.

The N-terminal stretch at 1-18 is a signal peptide; the sequence is MQKLQIFVYIYLFMLLVA. A propeptide spanning residues 19 to 266 is cleaved from the precursor; the sequence is GPVDLNENSE…VTDTPKRSRR (248 aa). Asn-48 and Asn-71 each carry an N-linked (GlcNAc...) asparagine glycan. 4 disulfides stabilise this stretch: Cys-272–Cys-282, Cys-281–Cys-340, Cys-309–Cys-372, and Cys-313–Cys-374.

The protein belongs to the TGF-beta family. As to quaternary structure, homodimer; disulfide-linked. Interacts with WFIKKN2, leading to inhibit its activity. Interacts with FSTL3. In terms of processing, synthesized as large precursor molecule that undergoes proteolytic cleavage to generate an N-terminal propeptide and a disulfide linked C-terminal dimer, which is the biologically active molecule. The circulating form consists of a latent complex of the C-terminal dimer and other proteins, including its propeptide, which maintain the C-terminal dimer in a latent, inactive state. Ligand activation requires additional cleavage of the prodomain by a tolloid-like metalloproteinase.

It is found in the secreted. Acts specifically as a negative regulator of skeletal muscle growth. The polypeptide is Growth/differentiation factor 8 (MSTN) (Capra ibex (Ibex)).